The chain runs to 258 residues: Protein UL24 homolog (258 aa).

Belongs to the herpesviridae UL24 family.

Its subcellular location is the virion. The protein resides in the host cytoplasm. It is found in the host nucleus. It localises to the host nucleolus. The protein localises to the host Golgi apparatus. Its function is as follows. May participate in nuclear egress of viral particles. Plays a role in the dispersal of several host nucleolar proteins including NCL/nucleolin and NPM1. Since deletion of host NCL/nucleolin negatively impact on nuclear egress, UL24 supposedly acts on this process through its effect on host nucleoli. This chain is Protein UL24 homolog, found in Varicella-zoster virus (strain Dumas) (HHV-3).